A 258-amino-acid polypeptide reads, in one-letter code: Acyl-[acyl-carrier-protein]--UDP-N-acetylglucosamine O-acyltransferase (258 aa).

This sequence belongs to the transferase hexapeptide repeat family. LpxA subfamily. As to quaternary structure, homotrimer.

It localises to the cytoplasm. The enzyme catalyses a (3R)-hydroxyacyl-[ACP] + UDP-N-acetyl-alpha-D-glucosamine = a UDP-3-O-[(3R)-3-hydroxyacyl]-N-acetyl-alpha-D-glucosamine + holo-[ACP]. The protein operates within glycolipid biosynthesis; lipid IV(A) biosynthesis; lipid IV(A) from (3R)-3-hydroxytetradecanoyl-[acyl-carrier-protein] and UDP-N-acetyl-alpha-D-glucosamine: step 1/6. Functionally, involved in the biosynthesis of lipid A, a phosphorylated glycolipid that anchors the lipopolysaccharide to the outer membrane of the cell. The sequence is that of Acyl-[acyl-carrier-protein]--UDP-N-acetylglucosamine O-acyltransferase from Halorhodospira halophila (strain DSM 244 / SL1) (Ectothiorhodospira halophila (strain DSM 244 / SL1)).